The chain runs to 324 residues: MHFLVALVLLGQIIGSTLSSQVRGDLECDDREAKEWADQAVRYINEHKLHEYKQALNVIKNIVVVPWNGDLVAVFLKLNLLETECHVLDPTPVEKCTIRPQQNHAVEMDCDAKIMFDVETFKQDVFVKCHSTPDSVEDVRRNCPKCPILLSPRDPHVVDSVEYVLNKHNEQLSGHVYEVLEISRGQHKYEPEAFYVEFAIVEVNCTAQEAHDDHHHCHPNTAGEDHIAFCKATVFRSHASLEKPKHENFESDCVILDVKEGHAHSHLIEHHIGKYSTSPGQNSTVECVAECPVAFVNKEVPTDISDRHTTPVKGCPGKILHFQL.

The first 19 residues, 1 to 19 (MHFLVALVLLGQIIGSTLS), serve as a signal peptide directing secretion. Cystatin fetuin-A-type domains follow at residues 22 to 130 (VRGD…VKCH) and 141 to 254 (RNCP…SDCV). Residues 23 to 25 (RGD) carry the Cell attachment site motif. 7 cysteine pairs are disulfide-bonded: C28–C315, C85–C96, C110–C129, C143–C146, C205–C217, C230–C253, and C287–C291. The N-linked (GlcNAc...) asparagine glycan is linked to N204. N-linked (GlcNAc...) asparagine glycosylation occurs at N282.

In terms of assembly, homodimer. Expressed by the liver.

Its subcellular location is the secreted. Suppress hemorrhage induced by metalloproteinases from the same venom (brevilysin-H3, -H4, -H6) and from habu venom (weak inhibition of the metalloproteinases HR2A). The non-hemorrhagic brevilysin-H2 is strongly inhibited by jMSF, whereas the brevilysin-L6 is not inhibited. Does not inhibit serine and cysteine proteases such as trypsin, chymotrypsin, thermolysin, and papain. The inhibition may occur by formation of a non-covalent complex between this protein and the proteinases at their metalloproteinase domains. The polypeptide is Antihemorrhagic factor jMSF (Gloydius blomhoffii (Mamushi)).